Consider the following 914-residue polypeptide: Eukaryotic initiation factor 4F subunit p130 (914 aa).

Over residues 1–12 (MTDQRGPPPPHP) the composition is skewed to pro residues. Disordered stretches follow at residues 1–84 (MTDQ…YNNR), 128–205 (PPYT…NEAV), 240–351 (ERKK…VNKS), and 457–535 (IARN…LVPS). The span at 26-44 (NQYSGANNSQPNNHYNENL) shows a compositional bias: polar residues. The segment covering 59 to 73 (KNGKYGTNKYNNRNN) has biased composition (low complexity). The residue at position 74 (Ser74) is a Phosphoserine. The span at 145-155 (PKTTKIEITTK) shows a compositional bias: low complexity. Positions 156–195 (TGERLNLKKFHEEKKASKGEEKNDGVEQKSKSGTPFEKEA) are enriched in basic and acidic residues. Thr196 is subject to Phosphothreonine. An interaction with PAB1 region spans residues 201–315 (ANEAVKDTLT…TGSVTKSVTF (115 aa)). Residues 240 to 263 (ERKKNGLISETEKKQETSNHDNTD) are compositionally biased toward basic and acidic residues. Composition is skewed to polar residues over residues 298-325 (SVKTPQHVTGSVTKSVTFNEPENESSSQ) and 339-348 (ISDTTGGKTV). At Thr301 the chain carries Phosphothreonine. Basic and acidic residues predominate over residues 496–529 (RMGDDRRSNRGYTSRKDREKAAEKAEEQAPKEEI). Ser503 carries the phosphoserine modification. Residues 567–810 (ERKMKSLLNK…IDVKELREIK (244 aa)) enclose the MIF4G domain. Residues 833 to 914 (QLRQKKNSQR…ALMNNDGDSD (82 aa)) are disordered. The segment covering 841–867 (QRSNSRFNNHNQSNSNRYSSNRRNMQN) has biased composition (low complexity). Polar residues predominate over residues 868–886 (TQRDSFASTKTGSFRNNQR). At Ser913 the chain carries Phosphoserine.

This sequence belongs to the eukaryotic initiation factor 4G family. In terms of assembly, component of the eIF4F complex, which composition varies with external and internal environmental conditions. It is composed of at least eIF4A (TIF1/TIF2), eIF4E (TIF45) and eIF4G (TIF4631 or TIF4632). Interacts with PAT1 in a RNA-dependent manner.

The protein localises to the cytoplasm. In terms of biological role, component of the eIF4F complex, which interacts with the mRNA cap structure and serves as an initial point of assembly for the translation apparatus. Stimulates translation by interaction with polyadenylate-binding protein PAB1, bringing the 5'- and 3'-ends of the mRNA in proximity. The formation of this circular mRNP structure appears to be critical for the synergistic effects of the cap and the poly(A) tail in facilitating translation initiation, recycling of ribosomes, and mRNA stability. TIF4632 is probably essential when TIF4631 is missing. This is Eukaryotic initiation factor 4F subunit p130 from Saccharomyces cerevisiae (strain ATCC 204508 / S288c) (Baker's yeast).